Here is a 276-residue protein sequence, read N- to C-terminus: Phosphatidylglycerol--prolipoprotein diacylglyceryl transferase (276 aa).

Helical transmembrane passes span 17 to 37 (FGPF…VLGW), 59 to 79 (FLSW…ILFY), 94 to 114 (VWDG…AILI), 132 to 152 (VPVP…GELW), 177 to 197 (PSEL…LLIA), 208 to 225 (GYLG…RTTA), and 235 to 255 (LGYL…MIVI). R142 is a binding site for a 1,2-diacyl-sn-glycero-3-phospho-(1'-sn-glycerol).

It belongs to the Lgt family.

The protein resides in the cell inner membrane. It carries out the reaction L-cysteinyl-[prolipoprotein] + a 1,2-diacyl-sn-glycero-3-phospho-(1'-sn-glycerol) = an S-1,2-diacyl-sn-glyceryl-L-cysteinyl-[prolipoprotein] + sn-glycerol 1-phosphate + H(+). It functions in the pathway protein modification; lipoprotein biosynthesis (diacylglyceryl transfer). In terms of biological role, catalyzes the transfer of the diacylglyceryl group from phosphatidylglycerol to the sulfhydryl group of the N-terminal cysteine of a prolipoprotein, the first step in the formation of mature lipoproteins. This chain is Phosphatidylglycerol--prolipoprotein diacylglyceryl transferase, found in Acidiphilium cryptum (strain JF-5).